The following is a 237-amino-acid chain: Ribonuclease PH (237 aa).

Phosphate-binding positions include R86 and 124–126; that span reads GTR.

The protein belongs to the RNase PH family. In terms of assembly, homohexameric ring arranged as a trimer of dimers.

It catalyses the reaction tRNA(n+1) + phosphate = tRNA(n) + a ribonucleoside 5'-diphosphate. In terms of biological role, phosphorolytic 3'-5' exoribonuclease that plays an important role in tRNA 3'-end maturation. Removes nucleotide residues following the 3'-CCA terminus of tRNAs; can also add nucleotides to the ends of RNA molecules by using nucleoside diphosphates as substrates, but this may not be physiologically important. Probably plays a role in initiation of 16S rRNA degradation (leading to ribosome degradation) during starvation. The chain is Ribonuclease PH from Roseobacter denitrificans (strain ATCC 33942 / OCh 114) (Erythrobacter sp. (strain OCh 114)).